The chain runs to 152 residues: Endoribonuclease YbeY (152 aa).

Zn(2+) is bound by residues histidine 118, histidine 122, and histidine 128.

This sequence belongs to the endoribonuclease YbeY family. Zn(2+) serves as cofactor.

It localises to the cytoplasm. Single strand-specific metallo-endoribonuclease involved in late-stage 70S ribosome quality control and in maturation of the 3' terminus of the 16S rRNA. The chain is Endoribonuclease YbeY from Lacticaseibacillus paracasei (strain ATCC 334 / BCRC 17002 / CCUG 31169 / CIP 107868 / KCTC 3260 / NRRL B-441) (Lactobacillus paracasei).